The primary structure comprises 781 residues: Acyl-CoA dehydrogenase family member 11 (781 aa).

Lysine 177 is subject to N6-acetyllysine. The residue at position 325 (tyrosine 325) is a Phosphotyrosine. N6-succinyllysine is present on lysine 392. FAD-binding positions include phenylalanine 505–serine 515, alanine 513–serine 515, tryptophan 539–serine 541, and serine 541. Serine 515 serves as a coordination point for substrate. Glycine 630–arginine 633 lines the substrate pocket. FAD is bound by residues arginine 658, glutamine 728, and glutamine 728–glycine 732. Residue glycine 756 coordinates substrate. FAD contacts are provided by residues proline 757–glutamate 759 and glutamate 759.

This sequence belongs to the acyl-CoA dehydrogenase family. Homodimer. Requires FAD as cofactor.

Its subcellular location is the peroxisome. It localises to the mitochondrion membrane. It catalyses the reaction a 2,3-saturated acyl-CoA + oxidized [electron-transfer flavoprotein] + H(+) = a (2E)-enoyl-CoA + reduced [electron-transfer flavoprotein]. It carries out the reaction docosanoyl-CoA + oxidized [electron-transfer flavoprotein] + H(+) = (2E)-docosenoyl-CoA + reduced [electron-transfer flavoprotein]. The enzyme catalyses tetracosanoyl-CoA + oxidized [electron-transfer flavoprotein] + H(+) = (2E)-tetracosenoyl-CoA + reduced [electron-transfer flavoprotein]. The catalysed reaction is eicosanoyl-CoA + oxidized [electron-transfer flavoprotein] + H(+) = (2E)-eicosenoyl-CoA + reduced [electron-transfer flavoprotein]. It catalyses the reaction hexacosanoyl-CoA + oxidized [electron-transfer flavoprotein] + H(+) = (2E)-hexacosenoyl-CoA + reduced [electron-transfer flavoprotein]. It carries out the reaction tricosanoyl-CoA + oxidized [electron-transfer flavoprotein] + H(+) = (2E)-tricosenoyl-CoA + reduced [electron-transfer flavoprotein]. Its pathway is lipid metabolism; fatty acid beta-oxidation. Its function is as follows. Acyl-CoA dehydrogenase, that exhibits maximal activity towards saturated C22-CoA. Probably participates in beta-oxydation and energy production but could also play a role in the metabolism of specific fatty acids to control fatty acids composition of cellular lipids in brain. In Pongo abelii (Sumatran orangutan), this protein is Acyl-CoA dehydrogenase family member 11 (ACAD11).